The chain runs to 204 residues: Probable GTP-binding protein EngB (204 aa).

The EngB-type G domain maps to 23–195; that stretch reads TLPEIAFVGR…ASALMQLLAM (173 aa). GTP contacts are provided by residues 31–38, 58–62, 76–79, 143–146, and 174–176; these read GRSNVGKS, GRTRE, DLPG, TKID, and FSA. Residues S38 and T60 each coordinate Mg(2+).

The protein belongs to the TRAFAC class TrmE-Era-EngA-EngB-Septin-like GTPase superfamily. EngB GTPase family. Mg(2+) is required as a cofactor.

In terms of biological role, necessary for normal cell division and for the maintenance of normal septation. This chain is Probable GTP-binding protein EngB, found in Gemmatimonas aurantiaca (strain DSM 14586 / JCM 11422 / NBRC 100505 / T-27).